A 149-amino-acid chain; its full sequence is Nucleoside diphosphate kinase 1 (149 aa).

Lys9, Phe57, Arg85, Thr91, Arg102, and Asn112 together coordinate ATP. The active-site Pros-phosphohistidine intermediate is His115.

It belongs to the NDK family. Mg(2+) is required as a cofactor. Autophosphorylated.

The enzyme catalyses a 2'-deoxyribonucleoside 5'-diphosphate + ATP = a 2'-deoxyribonucleoside 5'-triphosphate + ADP. It carries out the reaction a ribonucleoside 5'-diphosphate + ATP = a ribonucleoside 5'-triphosphate + ADP. Major role in the synthesis of nucleoside triphosphates other than ATP. The ATP gamma phosphate is transferred to the NDP beta phosphate via a ping-pong mechanism, using a phosphorylated active-site intermediate. Also exhibits a kinase-like activity towards histone H1. The polypeptide is Nucleoside diphosphate kinase 1 (NDPK1) (Saccharum officinarum (Sugarcane)).